A 430-amino-acid chain; its full sequence is Trigger factor (430 aa).

Residues 157-242 (GDLVALETWS…AVEVSEPVLP (86 aa)) form the PPIase FKBP-type domain.

Belongs to the FKBP-type PPIase family. Tig subfamily.

The protein resides in the cytoplasm. The enzyme catalyses [protein]-peptidylproline (omega=180) = [protein]-peptidylproline (omega=0). Involved in protein export. Acts as a chaperone by maintaining the newly synthesized protein in an open conformation. Functions as a peptidyl-prolyl cis-trans isomerase. This Xanthomonas euvesicatoria pv. vesicatoria (strain 85-10) (Xanthomonas campestris pv. vesicatoria) protein is Trigger factor.